The sequence spans 90 residues: Barrier-to-autointegration factor-like protein (90 aa).

Homodimer. Heterodimerizes with BANF1.

The protein localises to the nucleus. It localises to the cytoplasm. Its function is as follows. May play a role in BANF1 regulation and influence tissue-specific roles of BANF1. The chain is Barrier-to-autointegration factor-like protein (Banf2) from Mus musculus (Mouse).